The following is a 274-amino-acid chain: Undecaprenyl-diphosphatase (274 aa).

The next 8 membrane-spanning stretches (helical) occupy residues 4–24 (LLVI…LLPI), 46–66 (VVFE…EYRV), 86–106 (INVA…SDFI), 109–129 (VLFS…IIMW), 145–165 (ISYA…IPGT), 188–208 (FSFF…LWEA), 214–234 (IEDM…TFAV), and 250–270 (FAWY…TGVI).

The protein belongs to the UppP family.

The protein resides in the cell inner membrane. It carries out the reaction di-trans,octa-cis-undecaprenyl diphosphate + H2O = di-trans,octa-cis-undecaprenyl phosphate + phosphate + H(+). Its function is as follows. Catalyzes the dephosphorylation of undecaprenyl diphosphate (UPP). Confers resistance to bacitracin. This is Undecaprenyl-diphosphatase from Cellvibrio japonicus (strain Ueda107) (Pseudomonas fluorescens subsp. cellulosa).